Consider the following 337-residue polypeptide: Palmitoyltransferase ZDHHC15 (337 aa).

Residues 1–20 lie on the Cytoplasmic side of the membrane; it reads MRRGWKMALSGGLRCCRRVL. A helical membrane pass occupies residues 21 to 41; it reads SWVPVLVIVLVVLWSYYAYVF. Topologically, residues 42–56 are lumenal; sequence ELCLVTVLSPAEKVI. Residues 57-77 form a helical membrane-spanning segment; it reads YLILYHAIFVFFAWTYWKSIF. Residues 78-172 lie on the Cytoplasmic side of the membrane; it reads TLPQQPNQKF…NNCIGFSNYK (95 aa). The 51-residue stretch at 129–179 folds into the DHHC domain; sequence RFCDRCHLIKPDRCHHCSVCAMCVLKMDHHCPWVNNCIGFSNYKFFLQFLA. Residues Cys-131, Cys-134, His-144, Cys-145, Cys-148, Cys-151, and His-158 each coordinate Zn(2+). The S-palmitoyl cysteine intermediate role is filled by Cys-159. Position 165 (Cys-165) interacts with Zn(2+). The chain crosses the membrane as a helical span at residues 173–193; sequence FFLQFLAYSVLYCLYIATTVF. The Lumenal portion of the chain corresponds to 194-210; that stretch reads SYFIKYWRGELPSVRSK. A helical transmembrane segment spans residues 211-234; sequence FHVLFLLFVACMFFVSLVILFGYH. The Cytoplasmic portion of the chain corresponds to 235-337; that stretch reads CWLVSRNKTT…LSSLAVESET (103 aa). Residues 293–337 are disordered; sequence HSFPMRSMNESQNPLLANEEPWEDNEDESQDYPEGLSSLAVESET. Positions 312 to 323 are enriched in acidic residues; it reads EPWEDNEDESQD.

It belongs to the DHHC palmitoyltransferase family. Autopalmitoylated (in vitro). In terms of tissue distribution, in brain, expressed in both excitatory and inhibitory neurons but not expressed by glial cells.

The protein localises to the golgi apparatus membrane. Its subcellular location is the postsynaptic density. It catalyses the reaction L-cysteinyl-[protein] + hexadecanoyl-CoA = S-hexadecanoyl-L-cysteinyl-[protein] + CoA. The enzyme catalyses L-cysteinyl-[protein] + tetradecanoyl-CoA = S-tetradecanoyl-L-cysteinyl-[protein] + CoA. The catalysed reaction is L-cysteinyl-[protein] + octadecanoyl-CoA = S-octadecanoyl-L-cysteinyl-[protein] + CoA. Its function is as follows. Palmitoyltransferase that catalyzes the addition of palmitate onto various protein substrates. Has no stringent fatty acid selectivity and in addition to palmitate can also transfer onto target proteins myristate from tetradecanoyl-CoA and stearate from octadecanoyl-CoA. Palmitoylates IGF2R and SORT1, promoting their partitioning to an endosomal membrane subdomain where they can interact with the retromer cargo-selective complex. Thereby, regulates retrograde transport from endosomes to the Golgi apparatus of these lysosomal sorting receptors and plays a role in trafficking of lysosomal proteins. In the nervous system, catalyzes the palmitoylation of DLG4/PSD95 and regulates its synaptic clustering and function in synaptogenesis. Could be involved in the differentiation of dopaminergic neurons and the development of the diencephalon. Could also catalyze the palmitoylation of GAP43. Could also palmitoylate DNAJC5 and regulate its localization to the Golgi membrane. Could also palmitoylate FYN as shown in vitro. May palmitoylate CALHM3 subunit of gustatory voltage-gated ion channels and modulate channel gating and kinetics. This chain is Palmitoyltransferase ZDHHC15, found in Rattus norvegicus (Rat).